We begin with the raw amino-acid sequence, 98 residues long: Nucleoid-associated protein pc0477 (98 aa).

Belongs to the YbaB/EbfC family. In terms of assembly, homodimer.

It localises to the cytoplasm. Its subcellular location is the nucleoid. Binds to DNA and alters its conformation. May be involved in regulation of gene expression, nucleoid organization and DNA protection. The protein is Nucleoid-associated protein pc0477 of Protochlamydia amoebophila (strain UWE25).